The primary structure comprises 98 residues: uncharacterized protein (98 aa).

Residues 53–98 form a disordered region; the sequence is AALEGGRHRHRGESASGNGIQHGVPPNVALIPSGSTLLTPARSGHV.

This is an uncharacterized protein from Mycolicibacterium smegmatis (strain ATCC 700084 / mc(2)155) (Mycobacterium smegmatis).